The following is a 62-amino-acid chain: Large ribosomal subunit protein uL30 (62 aa).

It belongs to the universal ribosomal protein uL30 family. Part of the 50S ribosomal subunit.

This Kosmotoga olearia (strain ATCC BAA-1733 / DSM 21960 / TBF 19.5.1) protein is Large ribosomal subunit protein uL30.